A 158-amino-acid polypeptide reads, in one-letter code: 6,7-dimethyl-8-ribityllumazine synthase (158 aa).

5-amino-6-(D-ribitylamino)uracil-binding positions include phenylalanine 22, 56–58, and 80–82; these read ALE and VVI. 85–86 provides a ligand contact to (2S)-2-hydroxy-3-oxobutyl phosphate; the sequence is ET. Catalysis depends on histidine 88, which acts as the Proton donor. Asparagine 113 provides a ligand contact to 5-amino-6-(D-ribitylamino)uracil. Arginine 127 serves as a coordination point for (2S)-2-hydroxy-3-oxobutyl phosphate.

Belongs to the DMRL synthase family.

It catalyses the reaction (2S)-2-hydroxy-3-oxobutyl phosphate + 5-amino-6-(D-ribitylamino)uracil = 6,7-dimethyl-8-(1-D-ribityl)lumazine + phosphate + 2 H2O + H(+). It participates in cofactor biosynthesis; riboflavin biosynthesis; riboflavin from 2-hydroxy-3-oxobutyl phosphate and 5-amino-6-(D-ribitylamino)uracil: step 1/2. Catalyzes the formation of 6,7-dimethyl-8-ribityllumazine by condensation of 5-amino-6-(D-ribitylamino)uracil with 3,4-dihydroxy-2-butanone 4-phosphate. This is the penultimate step in the biosynthesis of riboflavin. In Neisseria gonorrhoeae (strain ATCC 700825 / FA 1090), this protein is 6,7-dimethyl-8-ribityllumazine synthase.